A 127-amino-acid chain; its full sequence is UPF0325 protein VS_2356 (127 aa).

It belongs to the UPF0325 family.

The sequence is that of UPF0325 protein VS_2356 from Vibrio atlanticus (strain LGP32) (Vibrio splendidus (strain Mel32)).